The primary structure comprises 66 residues: Conotoxin Ca5.2 (66 aa).

A signal peptide spans 1 to 22 (MRCVPVFLILLGLIASAPSVDA). Positions 23-48 (RPQTKDDALASFHDSAKRHLQRLVNA) are excised as a propeptide. F62 carries the phenylalanine amide modification.

The protein belongs to the conotoxin T superfamily. In terms of processing, contains 2 disulfide bonds that can be either 'C1-C3, C2-C4' or 'C1-C4, C2-C3', since these disulfide connectivities have been observed for conotoxins with cysteine framework V (for examples, see AC P0DQQ7 and AC P81755). Expressed by the venom duct.

The protein localises to the secreted. This chain is Conotoxin Ca5.2, found in Conus caracteristicus (Characteristic cone).